The following is an 838-amino-acid chain: Translation initiation factor IF-2 (838 aa).

2 disordered regions span residues 30–60 (PHTA…KVEE) and 94–254 (QRSP…PTGP). Basic and acidic residues-rich tracts occupy residues 33 to 43 (AAEEHVSDSEK) and 96 to 136 (SPEE…EARR). The span at 137 to 173 (QPAPVAEPVAAQAAAPAPAPVVEPVQEAPVATAAPAA) shows a compositional bias: low complexity. Basic and acidic residues-rich tracts occupy residues 174-214 (DARK…EKAP) and 222-231 (TTDEESDGFR). Over residues 232–245 (RGGRGKAKLKKRNA) the composition is skewed to basic residues. The region spanning 338–507 (ARAPVVTVMG…LLQAEVLELK (170 aa)) is the tr-type G domain. A G1 region spans residues 347-354 (GHVDHGKT). Residue 347-354 (GHVDHGKT) participates in GTP binding. The G2 stretch occupies residues 372–376 (GITQH). A G3 region spans residues 393–396 (DTPG). GTP is bound by residues 393-397 (DTPGH) and 447-450 (NKID). A G4 region spans residues 447-450 (NKID). Residues 483–485 (SAK) are G5.

This sequence belongs to the TRAFAC class translation factor GTPase superfamily. Classic translation factor GTPase family. IF-2 subfamily.

Its subcellular location is the cytoplasm. In terms of biological role, one of the essential components for the initiation of protein synthesis. Protects formylmethionyl-tRNA from spontaneous hydrolysis and promotes its binding to the 30S ribosomal subunits. Also involved in the hydrolysis of GTP during the formation of the 70S ribosomal complex. This is Translation initiation factor IF-2 from Pseudomonas fluorescens (strain ATCC BAA-477 / NRRL B-23932 / Pf-5).